The following is a 252-amino-acid chain: Trans-aconitate 2-methyltransferase (252 aa).

Belongs to the methyltransferase superfamily. Tam family.

The protein resides in the cytoplasm. The enzyme catalyses trans-aconitate + S-adenosyl-L-methionine = (E)-3-(methoxycarbonyl)pent-2-enedioate + S-adenosyl-L-homocysteine. Functionally, catalyzes the S-adenosylmethionine monomethyl esterification of trans-aconitate. This Escherichia coli O7:K1 (strain IAI39 / ExPEC) protein is Trans-aconitate 2-methyltransferase.